The following is a 21-amino-acid chain: Venom peptide Tv1 (21 aa).

3 cysteine pairs are disulfide-bonded: cysteine 4-cysteine 20, cysteine 5-cysteine 21, and cysteine 7-cysteine 16.

In terms of tissue distribution, expressed by the salivary gland. This peptide is considered as a venom peptide.

It localises to the secreted. Functionally, injections of 20 uM of this synthetic peptide (Ile) causes partial paralysis to polychaete worms (Nereis virens), the natural prey of terebrid snails. This paralysis may be due to an inhibition of nicotinic receptors at the neuromuscular junction. The chain is Venom peptide Tv1 from Terebra variegata (Variegate auger snail).